Here is a 954-residue protein sequence, read N- to C-terminus: Glycine dehydrogenase (decarboxylating) (954 aa).

Lys704 bears the N6-(pyridoxal phosphate)lysine mark.

It belongs to the GcvP family. As to quaternary structure, the glycine cleavage system is composed of four proteins: P, T, L and H. It depends on pyridoxal 5'-phosphate as a cofactor.

The catalysed reaction is N(6)-[(R)-lipoyl]-L-lysyl-[glycine-cleavage complex H protein] + glycine + H(+) = N(6)-[(R)-S(8)-aminomethyldihydrolipoyl]-L-lysyl-[glycine-cleavage complex H protein] + CO2. Functionally, the glycine cleavage system catalyzes the degradation of glycine. The P protein binds the alpha-amino group of glycine through its pyridoxal phosphate cofactor; CO(2) is released and the remaining methylamine moiety is then transferred to the lipoamide cofactor of the H protein. This Vibrio vulnificus (strain YJ016) protein is Glycine dehydrogenase (decarboxylating).